The chain runs to 175 residues: MMLYIVFILSVIFVMGFVGFSSKPSPIYGGLGLIVSGGVGCGIVLNFGGSFLGLMVFLIYLGGMMVVFGYTTAMATEQYPEIWLSNKAVLGAFVTGLLMEFFMVYYVLKDKEVEVVFEFNGLGDWVIYDTGDSGFFSEEAMGIAALYSYGTWLVIVTGWSLLIGVVVIMEITRGN.

5 helical membrane passes run 1–21, 25–45, 47–67, 88–108, and 149–169; these read MMLY…VGFS, SPIY…GIVL, FGGS…MMVV, AVLG…YYVL, and YGTW…VVIM.

This sequence belongs to the complex I subunit 6 family. In terms of assembly, core subunit of respiratory chain NADH dehydrogenase (Complex I) which is composed of 45 different subunits.

It is found in the mitochondrion inner membrane. The catalysed reaction is a ubiquinone + NADH + 5 H(+)(in) = a ubiquinol + NAD(+) + 4 H(+)(out). In terms of biological role, core subunit of the mitochondrial membrane respiratory chain NADH dehydrogenase (Complex I) which catalyzes electron transfer from NADH through the respiratory chain, using ubiquinone as an electron acceptor. Essential for the catalytic activity and assembly of complex I. The protein is NADH-ubiquinone oxidoreductase chain 6 (MT-ND6) of Bos indicus (Zebu).